A 535-amino-acid polypeptide reads, in one-letter code: 2-isopropylmalate synthase (535 aa).

One can recognise a Pyruvate carboxyltransferase domain in the interval 13-274; that stretch reads VLIFDTTLRD…YFNPFLGRPP (262 aa). Mn(2+) is bound by residues Asp22, His213, His215, and Asn249. Residues 414–535 are regulatory domain; the sequence is QLEFVQVSCG…LEQRALHPQA (122 aa).

This sequence belongs to the alpha-IPM synthase/homocitrate synthase family. LeuA type 1 subfamily. Homodimer. Mn(2+) serves as cofactor.

The protein resides in the cytoplasm. It catalyses the reaction 3-methyl-2-oxobutanoate + acetyl-CoA + H2O = (2S)-2-isopropylmalate + CoA + H(+). The protein operates within amino-acid biosynthesis; L-leucine biosynthesis; L-leucine from 3-methyl-2-oxobutanoate: step 1/4. Its function is as follows. Catalyzes the condensation of the acetyl group of acetyl-CoA with 3-methyl-2-oxobutanoate (2-ketoisovalerate) to form 3-carboxy-3-hydroxy-4-methylpentanoate (2-isopropylmalate). This Thermosynechococcus vestitus (strain NIES-2133 / IAM M-273 / BP-1) protein is 2-isopropylmalate synthase.